We begin with the raw amino-acid sequence, 254 residues long: Allene oxide cyclase 4, chloroplastic (254 aa).

Residues 1-52 constitute a chloroplast transit peptide; sequence MIMASSAAASISMITLRNLSRNHQSHQSTFLGFSRSFHNQRISSNSPGLSTR.

Belongs to the allene oxide cyclase family. As to expression, highly expressed in fully developed leaves.

It localises to the plastid. The protein resides in the chloroplast. The catalysed reaction is (9Z,13S,15Z)-12,13-epoxyoctadeca-9,11,15-trienoate = (9S,13S,15Z)-12-oxophyto-10,15-dienoate. Involved in the production of 12-oxo-phytodienoic acid (OPDA), a precursor of jasmonic acid. The chain is Allene oxide cyclase 4, chloroplastic (AOC4) from Arabidopsis thaliana (Mouse-ear cress).